A 694-amino-acid chain; its full sequence is Polyribonucleotide nucleotidyltransferase (694 aa).

2 residues coordinate Mg(2+): Asp-485 and Asp-491. The 60-residue stretch at 552-611 folds into the KH domain; it reads PRIETMQIKPNKIATVIGPGGKQIRQIIEEAGVQIDINDSGLVSISASSPQAIEKAKSII. The region spanning 621 to 689 is the S1 motif domain; the sequence is GKIYEGRVTS…EKGQYKLSHK (69 aa).

The protein belongs to the polyribonucleotide nucleotidyltransferase family. Mg(2+) serves as cofactor.

It is found in the cytoplasm. The enzyme catalyses RNA(n+1) + phosphate = RNA(n) + a ribonucleoside 5'-diphosphate. Its function is as follows. Involved in mRNA degradation. Catalyzes the phosphorolysis of single-stranded polyribonucleotides processively in the 3'- to 5'-direction. In Chlamydia felis (strain Fe/C-56) (Chlamydophila felis), this protein is Polyribonucleotide nucleotidyltransferase.